The primary structure comprises 1165 residues: TBC1 domain family member 1 (1165 aa).

S146 carries the post-translational modification Phosphoserine. A disordered region spans residues 207–234; it reads FSSDQSRSALQPPGDGERGPRPMRKSFS. A Phosphoserine; by PKB/AKT1 modification is found at S232. S234 carries the phosphoserine; by AMPK modification. The PID domain maps to 243–401; it reads FRKEFQDAGL…LHKLCERIEG (159 aa). S500 carries the post-translational modification Phosphoserine. At T502 the chain carries Phosphothreonine; by PKB/AKT1. Phosphoserine is present on residues S504, S522, S524, S562, S563, S567, S568, and S582. T593 is modified (phosphothreonine). S611 carries the phosphoserine modification. The residue at position 624 (S624) is a Phosphoserine; by PKB/AKT1. Residues 624-651 are disordered; the sequence is SVSTETPHERKDFESKADHISDASRTPV. A compositionally biased stretch (basic and acidic residues) spans 629–645; that stretch reads TPHERKDFESKADHISD. Residues S692 and S938 each carry the phosphoserine modification. The region spanning 797 to 991 is the Rab-GAP TBC domain; sequence GVPRHHRGEI…RVFDMIFLQG (195 aa). Position 949 is a phosphotyrosine (Y949). Residues 1146–1165 are disordered; the sequence is QTAELGSQESDPTLPKPSGD.

In terms of assembly, interacts with APPL2 (via BAR domain); interaction is dependent of TBC1D1 phosphorylation at Ser-232; interaction diminishes the phosphorylation of TBC1D1 at Thr-593, resulting in inhibition of SLC2A4/GLUT4 translocation and glucose uptake. Insulin-stimulated phosphorylation by AKT family kinases stimulates SLC2A4/GLUT4 translocation.

The protein localises to the nucleus. Functionally, may act as a GTPase-activating protein for Rab family protein(s). May play a role in the cell cycle and differentiation of various tissues. Involved in the trafficking and translocation of GLUT4-containing vesicles and insulin-stimulated glucose uptake into cells. This is TBC1 domain family member 1 (TBC1D1) from Bos taurus (Bovine).